The chain runs to 555 residues: Oligo-1,6-glucosidase (555 aa).

Asp199 (nucleophile) is an active-site residue. Catalysis depends on Glu255, which acts as the Proton donor.

The protein belongs to the glycosyl hydrolase 13 family.

The protein localises to the cytoplasm. It catalyses the reaction Hydrolysis of (1-&gt;6)-alpha-D-glucosidic linkages in some oligosaccharides produced from starch and glycogen by alpha-amylase, and in isomaltose.. The sequence is that of Oligo-1,6-glucosidase (malL) from Heyndrickxia coagulans (Weizmannia coagulans).